A 60-amino-acid chain; its full sequence is Large ribosomal subunit protein uL30 (60 aa).

It belongs to the universal ribosomal protein uL30 family. In terms of assembly, part of the 50S ribosomal subunit.

The chain is Large ribosomal subunit protein uL30 from Streptococcus pneumoniae serotype 2 (strain D39 / NCTC 7466).